The following is a 229-amino-acid chain: Large ribosomal subunit protein uL1 (229 aa).

This sequence belongs to the universal ribosomal protein uL1 family. In terms of assembly, part of the 50S ribosomal subunit.

Its function is as follows. Binds directly to 23S rRNA. The L1 stalk is quite mobile in the ribosome, and is involved in E site tRNA release. In terms of biological role, protein L1 is also a translational repressor protein, it controls the translation of the L11 operon by binding to its mRNA. This is Large ribosomal subunit protein uL1 from Streptococcus sanguinis (strain SK36).